Here is a 498-residue protein sequence, read N- to C-terminus: XK-related protein 4 (498 aa).

Residues 24–46 (SEHSGSVQGLHPGAQPDSAGAGD) form a disordered region. Helical transmembrane passes span 81-101 (CLWIVAAVAVYVADVGSDVWL) and 111-131 (YWWFGLTLFFVVLGSFSVQLF). The disordered stretch occupies residues 166 to 203 (SHGDVTAQHHPATPQRQASTASRNTTTNSTASTGLGPR). The span at 183-198 (ASTASRNTTTNSTAST) shows a compositional bias: low complexity. The next 2 helical transmembrane spans lie at 302 to 322 (LFIYYLLILAENAALSALWYL) and 332 to 352 (FAVPALCVIFSSFLTGVVFML).

This sequence belongs to the XK family.

It localises to the cell membrane. The enzyme catalyses a 1,2-diacyl-sn-glycero-3-phospho-L-serine(in) = a 1,2-diacyl-sn-glycero-3-phospho-L-serine(out). In terms of biological role, phospholipid scramblase that promotes phosphatidylserine exposure on apoptotic cell surface. Phosphatidylserine is a specific marker only present at the surface of apoptotic cells and acts as a specific signal for engulfment. The chain is XK-related protein 4 from Tetraodon nigroviridis (Spotted green pufferfish).